The following is a 231-amino-acid chain: 2-C-methyl-D-erythritol 2,4-cyclodiphosphate synthase, chloroplastic (231 aa).

The N-terminal 52 residues, 1 to 52 (MATSSTQLLLSSSSLFHSQITKKPFLLPATKIGVWRPKKSLSLSCRPSASVS), are a transit peptide targeting the chloroplast. A divalent metal cation-binding residues include Asp82 and His84. Substrate contacts are provided by residues 82 to 84 (DLH), 108 to 109 (HS), 112 to 120 (DVLLHCVVD), 130 to 132 (DIG), 135 to 139 (FPDSD), Asp139, 174 to 180 (LQRPKIS), and 205 to 209 (AKTHE). His116 serves as a coordination point for a divalent metal cation.

It belongs to the IspF family. In terms of assembly, homotrimer. A divalent metal cation is required as a cofactor.

Its subcellular location is the plastid. It localises to the chloroplast stroma. The enzyme catalyses 4-CDP-2-C-methyl-D-erythritol 2-phosphate = 2-C-methyl-D-erythritol 2,4-cyclic diphosphate + CMP. The protein operates within isoprenoid biosynthesis; isopentenyl diphosphate biosynthesis via DXP pathway; isopentenyl diphosphate from 1-deoxy-D-xylulose 5-phosphate: step 4/6. Functionally, enzyme of the plastid non-mevalonate pathway for isoprenoid biosynthesis that converts 4-diphosphocytidyl-2C-methyl-D-erythritol 2-phosphate into 2C-methyl-D-erythritol 2,4-cyclodiphosphate and CMP. Is essential for chloroplast development. The sequence is that of 2-C-methyl-D-erythritol 2,4-cyclodiphosphate synthase, chloroplastic from Arabidopsis thaliana (Mouse-ear cress).